Reading from the N-terminus, the 180-residue chain is uncharacterized protein (180 aa).

This is an uncharacterized protein from Magallana gigas (Pacific oyster).